The chain runs to 395 residues: 8-amino-7-oxononanoate synthase (395 aa).

Lysine 24 is a binding site for substrate. 111 to 112 (GF) provides a ligand contact to pyridoxal 5'-phosphate. Residue histidine 136 participates in substrate binding. Pyridoxal 5'-phosphate is bound by residues serine 184, 209 to 212 (DDAH), and 240 to 243 (TLSK). Lysine 243 carries the post-translational modification N6-(pyridoxal phosphate)lysine. Threonine 357 provides a ligand contact to substrate.

This sequence belongs to the class-II pyridoxal-phosphate-dependent aminotransferase family. BioF subfamily. Homodimer. Pyridoxal 5'-phosphate serves as cofactor.

The enzyme catalyses 6-carboxyhexanoyl-[ACP] + L-alanine + H(+) = (8S)-8-amino-7-oxononanoate + holo-[ACP] + CO2. Its pathway is cofactor biosynthesis; biotin biosynthesis. Catalyzes the decarboxylative condensation of pimeloyl-[acyl-carrier protein] and L-alanine to produce 8-amino-7-oxononanoate (AON), [acyl-carrier protein], and carbon dioxide. This is 8-amino-7-oxononanoate synthase from Treponema denticola (strain ATCC 35405 / DSM 14222 / CIP 103919 / JCM 8153 / KCTC 15104).